The following is an 806-amino-acid chain: MASKIKNGLSDTTLRKSSSTSLRVPRLTRIVTKPDSNSPSPTQQQSRLSFERPSSNSKPSTDKRSPKAPTPPEKTQIRAVRVSESQPQSVQIKEDLKKANELIASLENEKAKALDQLKEARKEAEEASEKLDEALEAQKKSLENFEIEKFEVVEAGIEAVQRKEEELKKELENVKNQHASESATLLLVTQELENVNQELANAKDAKSKALCRADDASKMAAIHAEKVEILSSELIRLKALLDSTREKEIISKNEIALKLGAEIVDLKRDLENARSLEAKVKELEMIIEQLNVDLEAAKMAESYAHGFADEWQNKAKELEKRLEEANKLEKCASVSLVSVTKQLEVSNSRLHDMESEITDLKEKIELLEMTVASQKVDLEKSEQKLGIAEEESSKSEKEAEKLKNELETVNEEKTQALKKEQDATSSVQRLLEEKKKILSELESSKEEEEKSKKAMESLASALHEVSSESRELKEKLLSRGDQNYETQIEDLKLVIKATNNKYENMLDEARHEIDVLVNAVEQTKKQFESAMVDWEMREAGLVNHVKEFDEEVSSMGKEMNRLGNLVKRTKEEADASWEKESQMRDCLKEVEDEVIYLQETLREAKAETLKLKGKMLDKETEFQSIVHENDELRVKQDDSLKKIKELSELLEEALAKKHIEENGELSESEKDYDLLPKVVEFSEENGYRSAEEKSSKVETLDGMNMKLEEDTEKKEKKERSPEDETVEVEFKMWESCQIEKKEVFHKESAKEEEEDLNVVDQSQKTSPVNGLTGEDELLKEKEKKKKKTLFGKVGNLLKKKGPVNQK.

The N-terminal 78 residues, 1 to 78 (MASKIKNGLS…PTPPEKTQIR (78 aa)), are a transit peptide targeting the chloroplast. Disordered stretches follow at residues 1-94 (MASK…QIKE) and 380-403 (KSEQ…EKLK). The segment covering 9–22 (LSDTTLRKSSSTSL) has biased composition (low complexity). A compositionally biased stretch (polar residues) spans 34-59 (PDSNSPSPTQQQSRLSFERPSSNSKP). 3 coiled-coil regions span residues 88-530 (QSVQ…FESA), 585-662 (DCLK…IEEN), and 698-757 (ETLD…EDLN). Positions 391 to 403 (ESSKSEKEAEKLK) are enriched in basic and acidic residues. 2 disordered regions span residues 684-725 (ENGY…EDET) and 746-777 (KESA…EDEL). 2 stretches are compositionally biased toward basic and acidic residues: residues 685–699 (NGYR…KVET) and 706–725 (KLEE…EDET). Residues 759–769 (VDQSQKTSPVN) show a composition bias toward polar residues.

This sequence belongs to the WEB family.

The protein localises to the plastid. The protein resides in the chloroplast. This is WEB family protein At3g02930, chloroplastic from Arabidopsis thaliana (Mouse-ear cress).